The primary structure comprises 86 residues: MERKQRKVYQGRVVSDKMDKTITVVVETKRNHPVYGKRINYSKKYKAHDENNSAKTGDIVRIMETRPLSKDKRFRLVEIVEEAVII.

The protein belongs to the universal ribosomal protein uS17 family. As to quaternary structure, part of the 30S ribosomal subunit.

Functionally, one of the primary rRNA binding proteins, it binds specifically to the 5'-end of 16S ribosomal RNA. This chain is Small ribosomal subunit protein uS17, found in Lactococcus lactis subsp. cremoris (strain SK11).